The sequence spans 486 residues: Hematopoietic lineage cell-specific protein (486 aa).

The involved in HAX-1 binding stretch occupies residues 27 to 66 (FVNDISEKEQRWGAKTIEGSGRTEHINIHQLRNKVSEEHD). Lys41 carries the post-translational modification N6-acetyllysine. Cortactin repeat units follow at residues 79-115 (ASHGYGGRFGVERDRMDKSAVGHEYVAEVEKHSSQTD), 116-152 (AAKGFGGKYGVERDRADKSAVGFDYKGEVEKHTSQKD), and 153-189 (YSRGFGGRYGVEKDKWDKAALGYDYKGETEKHESQRD). An N6-acetyllysine modification is found at Lys123. Phosphotyrosine is present on Tyr140. Residues 190–212 (YAKGFGGQYGIQKDRVDKSAVGF) form a Cortactin 4; truncated repeat. N6-acetyllysine is present on Lys192. Tyr198 carries the post-translational modification Phosphotyrosine. Tyr222 bears the Phosphotyrosine; by FGR mark. At Lys241 the chain carries N6-acetyllysine. The segment covering 243-276 (ESMAEEKRKREEEEKAQQVARRQQERKAVTKRSP) has biased composition (basic and acidic residues). Residues 243–419 (ESMAEEKRKR…SALAGSSGCP (177 aa)) form a disordered region. Ser275 carries the phosphoserine modification. Position 308 is a phosphothreonine (Thr308). A compositionally biased stretch (basic and acidic residues) spans 315 to 324 (EPVRTSREHP). Acidic residues-rich tracts occupy residues 353–383 (QVEEEPVYEAEPEPEPEPEPEPENDYEDVEE) and 390–405 (EDEPEGDYEEVLEPED). Phosphotyrosine; by SYK and FES is present on residues Tyr378 and Tyr397. Over residues 406–419 (SSFSSALAGSSGCP) the composition is skewed to low complexity. An SH3 domain is found at 428–486 (ALGISAVAVYDYQGEGSDELSFDPDDVITDIEMVDEGWWRGRCHGHFGLFPANYVKLLE).

As to quaternary structure, associates with the SH2 and SH3 domains of LCK. Binding to he LCK SH3 domain occurs constitutively, while binding to the LCK SH2 domain occurs only upon TCR stimulation. A similar binding pattern was observed with LYN, but not with FYN in which the FYN SH2 region associates upon TCR stimulation but the FYN SH3 region does not associate regardless of TCR stimulation. Directly associates with HAX1, through binding to its C-terminal region. Interacts with HS1BP3. Interacts with FES/FPS. Interacts (via SH2 domain) with FGR. Forms a multiprotein complex with LYN and ANKRD54. In terms of processing, phosphorylated by FES. Phosphorylated by LYN, FYN and FGR after cross-linking of surface IgM on B-cells. Phosphorylation by LYN, FYN and FGR requires prior phosphorylation by SYK or FES. Expressed only in tissues and cells of hematopoietic origin.

The protein resides in the membrane. It is found in the cytoplasm. The protein localises to the mitochondrion. Substrate of the antigen receptor-coupled tyrosine kinase. Plays a role in antigen receptor signaling for both clonal expansion and deletion in lymphoid cells. May also be involved in the regulation of gene expression. The chain is Hematopoietic lineage cell-specific protein (HCLS1) from Homo sapiens (Human).